Consider the following 356-residue polypeptide: Glutenin, low molecular weight subunit (356 aa).

Residues 1-19 (MKTFLVFALLALAAASAVA) form the signal peptide. Positions 20-179 (QISQQQQAPP…LQQQRPPFSR (160 aa)) are disordered.

The protein belongs to the gliadin/glutenin family. As to quaternary structure, disulfide-bridge linked aggregates.

In terms of biological role, glutenins are high-molecular weight seed storage proteins of wheat endosperm. Thought to be responsible for the visco-elastic property of wheat dough. This is Glutenin, low molecular weight subunit from Triticum aestivum (Wheat).